We begin with the raw amino-acid sequence, 71 residues long: Disintegrin simusmin (71 aa).

The Disintegrin domain occupies 1–71 (AGEECDCGSP…SADCPRNPFH (71 aa)). 6 disulfides stabilise this stretch: C5–C20, C7–C15, C14–C37, C28–C34, C33–C58, and C46–C65. The Cell attachment site signature appears at 50-52 (RGD).

Belongs to the venom metalloproteinase (M12B) family. P-II subfamily. P-IIa sub-subfamily. In terms of assembly, monomer. Expressed by the venom gland.

Its subcellular location is the secreted. Inhibits ADP- (IC(50)=56 nM) and collagen-induced (IC(50)=49 nM) aggregation of human platelets. In vitro, inhibits adhesion of endothelial cells to vitronectin, type-I collagen and, to a lower degree, fibronectin and laminin. The sequence is that of Disintegrin simusmin from Crotalus simus (Central American rattlesnake).